We begin with the raw amino-acid sequence, 224 residues long: Ribonuclease T (224 aa).

A compositionally biased stretch (acidic residues) spans 1–11; it reads MSEDLYEDDLD. Residues 1–22 are disordered; sequence MSEDLYEDDLDTQGSSGPRHPM. Residues 32–206 enclose the Exonuclease domain; sequence VVVDVETGGF…YDTEKTAELF (175 aa). Residues Asp35, Glu37, His193, and Asp198 each coordinate Mg(2+). His193 acts as the Proton donor/acceptor in catalysis.

The protein belongs to the RNase T family. As to quaternary structure, homodimer. The cofactor is Mg(2+).

Functionally, trims short 3' overhangs of a variety of RNA species, leaving a one or two nucleotide 3' overhang. Responsible for the end-turnover of tRNA: specifically removes the terminal AMP residue from uncharged tRNA (tRNA-C-C-A). Also appears to be involved in tRNA biosynthesis. The sequence is that of Ribonuclease T from Pseudomonas putida (strain ATCC 700007 / DSM 6899 / JCM 31910 / BCRC 17059 / LMG 24140 / F1).